Consider the following 267-residue polypeptide: Ribonuclease HII (267 aa).

In terms of domain architecture, RNase H type-2 spans W57–A245. 3 residues coordinate a divalent metal cation: D63, E64, and D154.

This sequence belongs to the RNase HII family. Requires Mn(2+) as cofactor. Mg(2+) is required as a cofactor.

The protein resides in the cytoplasm. The catalysed reaction is Endonucleolytic cleavage to 5'-phosphomonoester.. Endonuclease that specifically degrades the RNA of RNA-DNA hybrids. This Nitrobacter hamburgensis (strain DSM 10229 / NCIMB 13809 / X14) protein is Ribonuclease HII.